A 440-amino-acid chain; its full sequence is D-serine dehydratase (440 aa).

Lys116 bears the N6-(pyridoxal phosphate)lysine mark.

The protein belongs to the serine/threonine dehydratase family. DsdA subfamily. As to quaternary structure, monomer. The cofactor is pyridoxal 5'-phosphate.

It carries out the reaction D-serine = pyruvate + NH4(+). The sequence is that of D-serine dehydratase from Salmonella paratyphi A (strain ATCC 9150 / SARB42).